A 1580-amino-acid polypeptide reads, in one-letter code: Pentafunctional AROM polypeptide (1580 aa).

The 3-dehydroquinate synthase stretch occupies residues 1–381 (MATPTVIKIL…HEQKASVVSN (381 aa)). NAD(+)-binding positions include 44-46 (DTT), 81-84 (EVSK), 114-116 (GGV), and aspartate 119. Residue arginine 130 coordinates 7-phospho-2-dehydro-3-deoxy-D-arabino-heptonate. 139-140 (TT) serves as a coordination point for NAD(+). The 7-phospho-2-dehydro-3-deoxy-D-arabino-heptonate site is built by aspartate 146 and lysine 152. Lysine 161 provides a ligand contact to NAD(+). Asparagine 162 is a binding site for 7-phospho-2-dehydro-3-deoxy-D-arabino-heptonate. Residues 179–182 (FLNT) and asparagine 190 each bind NAD(+). Residue glutamate 194 participates in Zn(2+) binding. Lysine 247 is a binding site for 7-phospho-2-dehydro-3-deoxy-D-arabino-heptonate. The Proton acceptor; for 3-dehydroquinate synthase activity role is filled by glutamate 257. Residues 261-265 (RNLLN) and histidine 268 each bind 7-phospho-2-dehydro-3-deoxy-D-arabino-heptonate. Histidine 268 provides a ligand contact to Zn(2+). Histidine 272 (proton acceptor; for 3-dehydroquinate synthase activity) is an active-site residue. 7-phospho-2-dehydro-3-deoxy-D-arabino-heptonate contacts are provided by histidine 284 and lysine 353. Residue histidine 284 participates in Zn(2+) binding. Residues 394-838 (VSPGVPHALE…WDTLAQLFKA (445 aa)) are EPSP synthase. The For EPSP synthase activity role is filled by cysteine 820. Residues 857-1048 (ASLFIIGMRG…KKKPQSFFVS (192 aa)) are shikimate kinase. 863 to 870 (GMRGAGKT) is a binding site for ATP. The segment at 1049–1269 (LTLPDLRPSV…AAPGQLSAKE (221 aa)) is 3-dehydroquinase. The Proton acceptor; for 3-dehydroquinate dehydratase activity role is filled by histidine 1172. The Schiff-base intermediate with substrate; for 3-dehydroquinate dehydratase activity role is filled by lysine 1200. The tract at residues 1282–1580 (SKKFAIVGKP…AAVMNADADI (299 aa)) is shikimate dehydrogenase.

In the N-terminal section; belongs to the sugar phosphate cyclases superfamily. Dehydroquinate synthase family. This sequence in the 2nd section; belongs to the EPSP synthase family. It in the 3rd section; belongs to the shikimate kinase family. The protein in the 4th section; belongs to the type-I 3-dehydroquinase family. In the C-terminal section; belongs to the shikimate dehydrogenase family. As to quaternary structure, homodimer. Zn(2+) is required as a cofactor.

It localises to the cytoplasm. The enzyme catalyses 7-phospho-2-dehydro-3-deoxy-D-arabino-heptonate = 3-dehydroquinate + phosphate. It carries out the reaction 3-dehydroquinate = 3-dehydroshikimate + H2O. The catalysed reaction is shikimate + NADP(+) = 3-dehydroshikimate + NADPH + H(+). It catalyses the reaction shikimate + ATP = 3-phosphoshikimate + ADP + H(+). The enzyme catalyses 3-phosphoshikimate + phosphoenolpyruvate = 5-O-(1-carboxyvinyl)-3-phosphoshikimate + phosphate. It participates in metabolic intermediate biosynthesis; chorismate biosynthesis; chorismate from D-erythrose 4-phosphate and phosphoenolpyruvate: step 2/7. It functions in the pathway metabolic intermediate biosynthesis; chorismate biosynthesis; chorismate from D-erythrose 4-phosphate and phosphoenolpyruvate: step 3/7. The protein operates within metabolic intermediate biosynthesis; chorismate biosynthesis; chorismate from D-erythrose 4-phosphate and phosphoenolpyruvate: step 4/7. Its pathway is metabolic intermediate biosynthesis; chorismate biosynthesis; chorismate from D-erythrose 4-phosphate and phosphoenolpyruvate: step 5/7. It participates in metabolic intermediate biosynthesis; chorismate biosynthesis; chorismate from D-erythrose 4-phosphate and phosphoenolpyruvate: step 6/7. In terms of biological role, the AROM polypeptide catalyzes 5 consecutive enzymatic reactions in prechorismate polyaromatic amino acid biosynthesis. The chain is Pentafunctional AROM polypeptide from Uncinocarpus reesii (strain UAMH 1704).